The primary structure comprises 1207 residues: DNA-directed RNA polymerase subunit beta (1207 aa).

This sequence belongs to the RNA polymerase beta chain family. As to quaternary structure, the RNAP catalytic core consists of 2 alpha, 1 beta, 1 beta' and 1 omega subunit. When a sigma factor is associated with the core the holoenzyme is formed, which can initiate transcription.

The catalysed reaction is RNA(n) + a ribonucleoside 5'-triphosphate = RNA(n+1) + diphosphate. DNA-dependent RNA polymerase catalyzes the transcription of DNA into RNA using the four ribonucleoside triphosphates as substrates. The sequence is that of DNA-directed RNA polymerase subunit beta from Enterococcus faecalis (strain ATCC 700802 / V583).